The chain runs to 283 residues: uncharacterized protein (283 aa).

The next 5 membrane-spanning stretches (helical) occupy residues 8-28, 38-58, 73-93, 100-120, and 175-195; these read LILS…IGYV, GIHS…VKIA, FECL…YEIG, IIYG…ILSI, and AIAG…ICLT.

It belongs to the cation diffusion facilitator (CDF) transporter (TC 2.A.4) family.

It localises to the cell membrane. This is an uncharacterized protein from Methanocaldococcus jannaschii (strain ATCC 43067 / DSM 2661 / JAL-1 / JCM 10045 / NBRC 100440) (Methanococcus jannaschii).